The chain runs to 743 residues: DNA ligase 2 (743 aa).

NAD(+) is bound by residues 45–49 (DADFD), 94–95 (SL), and Glu-125. The active-site N6-AMP-lysine intermediate is the Lys-127. Residues Arg-148, Glu-185, Lys-301, and Lys-325 each coordinate NAD(+). Zn(2+) contacts are provided by Cys-419, Cys-422, Cys-438, and Cys-444. Positions 639–728 (EGPRPLEGLT…PERAKEAALP (90 aa)) constitute a BRCT domain. Residues 720–743 (ERAKEAALPVPEAAPAADPENSGE) form a disordered region. The span at 725–743 (AALPVPEAAPAADPENSGE) shows a compositional bias: low complexity.

It belongs to the NAD-dependent DNA ligase family. LigA subfamily. Requires Mg(2+) as cofactor. The cofactor is Mn(2+).

It catalyses the reaction NAD(+) + (deoxyribonucleotide)n-3'-hydroxyl + 5'-phospho-(deoxyribonucleotide)m = (deoxyribonucleotide)n+m + AMP + beta-nicotinamide D-nucleotide.. Its function is as follows. DNA ligase that catalyzes the formation of phosphodiester linkages between 5'-phosphoryl and 3'-hydroxyl groups in double-stranded DNA using NAD as a coenzyme and as the energy source for the reaction. It is essential for DNA replication and repair of damaged DNA. The protein is DNA ligase 2 of Streptomyces griseus subsp. griseus (strain JCM 4626 / CBS 651.72 / NBRC 13350 / KCC S-0626 / ISP 5235).